A 117-amino-acid polypeptide reads, in one-letter code: Ribosome-binding factor A (117 aa).

It belongs to the RbfA family. As to quaternary structure, monomer. Binds 30S ribosomal subunits, but not 50S ribosomal subunits or 70S ribosomes.

The protein resides in the cytoplasm. One of several proteins that assist in the late maturation steps of the functional core of the 30S ribosomal subunit. Associates with free 30S ribosomal subunits (but not with 30S subunits that are part of 70S ribosomes or polysomes). Required for efficient processing of 16S rRNA. May interact with the 5'-terminal helix region of 16S rRNA. In Streptococcus suis (strain 98HAH33), this protein is Ribosome-binding factor A.